Reading from the N-terminus, the 366-residue chain is D-alanine--D-alanine ligase A (366 aa).

One can recognise an ATP-grasp domain in the interval 145–348 (KRLLRDAGLK…YRELITALIE (204 aa)). Position 175-230 (175-230 (VEQLGLPLFVKPANQGSSVGVSKVKREADLRAALDEAFRYDHKVLVEQAVIGREIE)) interacts with ATP. 3 residues coordinate Mg(2+): Asp-302, Glu-315, and Asn-317.

Belongs to the D-alanine--D-alanine ligase family. Mg(2+) serves as cofactor. It depends on Mn(2+) as a cofactor.

The protein resides in the cytoplasm. It carries out the reaction 2 D-alanine + ATP = D-alanyl-D-alanine + ADP + phosphate + H(+). It participates in cell wall biogenesis; peptidoglycan biosynthesis. Its function is as follows. Cell wall formation. The sequence is that of D-alanine--D-alanine ligase A from Chromobacterium violaceum (strain ATCC 12472 / DSM 30191 / JCM 1249 / CCUG 213 / NBRC 12614 / NCIMB 9131 / NCTC 9757 / MK).